The chain runs to 389 residues: Phospho-N-acetylmuramoyl-pentapeptide-transferase (389 aa).

The next 10 membrane-spanning stretches (helical) occupy residues 21–41 (FITF…LFFG), 70–90 (GTPT…TLLW), 97–117 (FVWV…VDDY), 134–154 (YMWQ…SVSA), 189–209 (TISY…VIVG), 222–242 (GLAI…AYLT), 259–279 (AGEL…FLWF), 286–306 (VFMG…IAVI), 311–331 (IVLF…MIQV), and 366–386 (QVVV…LSTL).

Belongs to the glycosyltransferase 4 family. MraY subfamily. Requires Mg(2+) as cofactor.

The protein resides in the cell inner membrane. It catalyses the reaction UDP-N-acetyl-alpha-D-muramoyl-L-alanyl-gamma-D-glutamyl-meso-2,6-diaminopimeloyl-D-alanyl-D-alanine + di-trans,octa-cis-undecaprenyl phosphate = di-trans,octa-cis-undecaprenyl diphospho-N-acetyl-alpha-D-muramoyl-L-alanyl-D-glutamyl-meso-2,6-diaminopimeloyl-D-alanyl-D-alanine + UMP. Its pathway is cell wall biogenesis; peptidoglycan biosynthesis. In terms of biological role, catalyzes the initial step of the lipid cycle reactions in the biosynthesis of the cell wall peptidoglycan: transfers peptidoglycan precursor phospho-MurNAc-pentapeptide from UDP-MurNAc-pentapeptide onto the lipid carrier undecaprenyl phosphate, yielding undecaprenyl-pyrophosphoryl-MurNAc-pentapeptide, known as lipid I. The sequence is that of Phospho-N-acetylmuramoyl-pentapeptide-transferase from Herminiimonas arsenicoxydans.